The chain runs to 465 residues: Ribulose bisphosphate carboxylase large chain (465 aa).

N6,N6,N6-trimethyllysine is present on lysine 4. Positions 113 and 163 each coordinate substrate. Lysine 165 acts as the Proton acceptor in catalysis. Position 167 (lysine 167) interacts with substrate. 3 residues coordinate Mg(2+): lysine 191, aspartate 193, and glutamate 194. Position 191 is an N6-carboxylysine (lysine 191). Histidine 284 functions as the Proton acceptor in the catalytic mechanism. Substrate contacts are provided by arginine 285, histidine 317, and serine 369.

The protein belongs to the RuBisCO large chain family. Type I subfamily. Heterohexadecamer of 8 large chains and 8 small chains; disulfide-linked. The disulfide link is formed within the large subunit homodimers. It depends on Mg(2+) as a cofactor. Post-translationally, the disulfide bond which can form in the large chain dimeric partners within the hexadecamer appears to be associated with oxidative stress and protein turnover.

It localises to the plastid. It is found in the chloroplast. It carries out the reaction 2 (2R)-3-phosphoglycerate + 2 H(+) = D-ribulose 1,5-bisphosphate + CO2 + H2O. The catalysed reaction is D-ribulose 1,5-bisphosphate + O2 = 2-phosphoglycolate + (2R)-3-phosphoglycerate + 2 H(+). In terms of biological role, ruBisCO catalyzes two reactions: the carboxylation of D-ribulose 1,5-bisphosphate, the primary event in carbon dioxide fixation, as well as the oxidative fragmentation of the pentose substrate in the photorespiration process. Both reactions occur simultaneously and in competition at the same active site. This chain is Ribulose bisphosphate carboxylase large chain, found in Senega cruciata (Cross-leaved milkwort).